The primary structure comprises 101 residues: A-type ATP synthase subunit F (101 aa).

It belongs to the V-ATPase F subunit family. Has multiple subunits, A(3), B(3), C, D, E, F, G, I and K(x); there may be a few other subunits as well.

It localises to the cell membrane. Functionally, component of the A-type ATP synthase that produces ATP from ADP in the presence of a proton gradient across the membrane. This is A-type ATP synthase subunit F from Methanosarcina mazei (strain ATCC BAA-159 / DSM 3647 / Goe1 / Go1 / JCM 11833 / OCM 88) (Methanosarcina frisia).